The primary structure comprises 305 residues: MSKKLTFQEIILTLQQYWNDQGCMLMQAYDNEKGAGTMSPYTFLRAIGPEPWNAAYVEPSRRPADGRYGENPNRLYQHHQFQVVMKPSPSNIQELYLASLEKLGINPLEHDIRFVEDNWENPSTGSAGLGWEVWLDGMEITQFTYFQQVGGLATSPVTAEVTYGLERLASYIQEVDSVYDIEWAPGVKYGEIFLQPEYEHSKYSFEISDQDMLLENFEKFEKEASRALEEGLVHPAYDYVLKCSHTFNLLDARGAVSVTERAGYIARIRNLARVVAKTFVAERKKLGLPLLDEATRAILLAEDDE.

Belongs to the class-II aminoacyl-tRNA synthetase family. In terms of assembly, tetramer of two alpha and two beta subunits.

Its subcellular location is the cytoplasm. It catalyses the reaction tRNA(Gly) + glycine + ATP = glycyl-tRNA(Gly) + AMP + diphosphate. The polypeptide is Glycine--tRNA ligase alpha subunit (Streptococcus pyogenes serotype M12 (strain MGAS2096)).